The following is a 59-amino-acid chain: Large ribosomal subunit protein bL32 (59 aa).

The protein belongs to the bacterial ribosomal protein bL32 family.

The polypeptide is Large ribosomal subunit protein bL32 (Lactiplantibacillus plantarum (strain ATCC BAA-793 / NCIMB 8826 / WCFS1) (Lactobacillus plantarum)).